Consider the following 238-residue polypeptide: IkB-like protein (238 aa).

ANK repeat units follow at residues 48–80 (GSSV…IINH), 87–118 (GNSA…TRIC), 124–153 (GMTP…PTQK), and 158–187 (GFTA…PLYM). A Nuclear localization signal motif is present at residues 80 to 86 (HHRRDND). The short motif at 202–213 (KKKPKIIITGCK) is the Nuclear localization signal element. Residues 205–212 (PKIIITGC) carry the PxIxITxC motif; Interaction with host PPP3CA motif. Residues 227 to 230 (FLCV) carry the FLCV motif motif.

The protein belongs to the asfivirus A238L family. Interacts with host PPIA. Interacts with host PPP3CA/Calcineurin. Interacts with host RELA/p65; interaction of the 32 kDa form with host RELA results in the formation of a stable complex with NF-kappa-B. Interacts with host PPP3R1. Interacts with host EP300; this interaction inhibits the association of host EP300 with host RELA, JUN and NFATC2. In terms of processing, the protein exists in a 28 kDa and a 32 kDa form, probably due to post-translational modifications which are neither phosphorylation, nor sumoylation.

Its subcellular location is the host nucleus. The protein resides in the host cytoplasm. Functionally, ikB-like protein that inhibits the binding of NF-kappa-B to DNA, thereby downregulating pro-inflammatory cytokine production. Forms a heterodimer with the NF-kappa-B subunit RELA/p65 and prevents the activation of the NF-kappa-B transcription factor. Inhibits calcineurin function, which is required for the induction of nuclear factor of activated T cells (NFAT)-dependent immune response genes. Prevents the binding of substrates to calcineurin without affecting the phosphatase activity. Does not contain the serine residues that are phosphorylated by host IkB kinase and thus is not degraded following stimulation of the NFkB pathway. The polypeptide is IkB-like protein (A238L) (Ornithodoros (relapsing fever ticks)).